A 298-amino-acid chain; its full sequence is WRKY transcription factor 22 (298 aa).

Disordered stretches follow at residues 75-116 and 181-220; these read EEPR…IQHK and AEHN…TYSS. A compositionally biased stretch (low complexity) spans 88–103; that stretch reads SLSASSGSVTSKPSGS. Residues 107–116 show a composition bias toward basic residues; that stretch reads RSKRRKIQHK. The WRKY DNA-binding region spans 122 to 188; the sequence is AAEALNSDVW…YTAEHNHPAP (67 aa). Over residues 190–220 the composition is skewed to polar residues; the sequence is HRNSLAGSTRQKPSDQQTSKSPTTTIATYSS.

This sequence belongs to the WRKY group II-e family.

The protein localises to the nucleus. In terms of biological role, transcription factor involved in the expression of defense genes in innate immune response of plants. Interacts specifically with the W box (5'-(T)TGAC[CT]-3'), a frequently occurring elicitor-responsive cis-acting element. Activates WRKY 29, SIRK and its own promoters. This is WRKY transcription factor 22 (WRKY22) from Arabidopsis thaliana (Mouse-ear cress).